A 107-amino-acid polypeptide reads, in one-letter code: MKVLVILFGAMLVLMEFQKASAATLLEDFDDDDDLLDDGGDFDLEANSDASSGNGNDSNDAVPEKRRACADLRGKTFCRLFKSYCDKKGIRGRLMRDKCSYSCGCRG.

A signal peptide spans Met1–Ala22. Positions Ala23–Arg67 are excised as a propeptide. Residues Asp37 to Ala46 show a composition bias toward acidic residues. Residues Asp37–Val62 are disordered. Positions Asn47–Ala61 are enriched in low complexity. Cystine bridges form between Cys69-Cys105, Cys78-Cys99, and Cys85-Cys103. An Arginine amide modification is found at Arg106.

The protein belongs to the coral AMP family. As to expression, is specifically expressed in the granular cells of the ectoderm.

The protein resides in the cytoplasm. It localises to the stress granule. The protein localises to the secreted. Its function is as follows. Cationic peptide with probable antimicrobial activity against coral pathogens. Shows in vitro activity against Gram-positive bacteria and the filamentous fungus F.oxysporum (MIC=1.25 uM). Gram-positive bacteria tested are B.megaterium (MIC=20 uM), S.aureus (MIC=5 uM), M. luteus (MIC=1.25 uM), B.stationis (MIC=10 uM), M.maritypicum (MIC=20 uM). Has no or little effect against Gram-negative bacteria (the coral pathogen V.coralliilyticus (MIC&gt;20 uM), V.aesturianus (MIC&gt;20 uM), V.shiloi (MIC&gt;20 uM), and E.coli (MIC=10 uM)). Has no hemolytic activity against sheep erythrocytes. The protein is Antimicrobial peptide damicornin of Pocillopora damicornis (Cauliflower coral).